A 254-amino-acid polypeptide reads, in one-letter code: Guanylate kinase (254 aa).

Positions 64–243 (KHLVVLAGPT…AAREVVDLMM (180 aa)) constitute a Guanylate kinase-like domain. 71 to 78 (GPTAVGKG) lines the ATP pocket.

The protein belongs to the guanylate kinase family.

The protein localises to the cytoplasm. The enzyme catalyses GMP + ATP = GDP + ADP. In terms of biological role, essential for recycling GMP and indirectly, cGMP. The polypeptide is Guanylate kinase (Leifsonia xyli subsp. xyli (strain CTCB07)).